The following is a 100-amino-acid chain: Urease subunit gamma (100 aa).

It belongs to the urease gamma subunit family. In terms of assembly, heterotrimer of UreA (gamma), UreB (beta) and UreC (alpha) subunits. Three heterotrimers associate to form the active enzyme.

The protein resides in the cytoplasm. It catalyses the reaction urea + 2 H2O + H(+) = hydrogencarbonate + 2 NH4(+). It participates in nitrogen metabolism; urea degradation; CO(2) and NH(3) from urea (urease route): step 1/1. In Prochlorococcus marinus (strain MIT 9312), this protein is Urease subunit gamma.